Here is a 216-residue protein sequence, read N- to C-terminus: CASP-like protein 2U1 (216 aa).

Positions 1-30 are disordered; sequence MKQDTEMGEATNGYIGTPGTVPVSHAGNDS. Residues 1–37 lie on the Cytoplasmic side of the membrane; the sequence is MKQDTEMGEATNGYIGTPGTVPVSHAGNDSGMRRMRT. A helical membrane pass occupies residues 38-58; the sequence is ASILMRLTAMALCVTALVTMV. Topologically, residues 59–86 are extracellular; the sequence is TDKQTHYFNFASTTIVKTAEYTNVLALK. The helical transmembrane segment at 87–107 threads the bilayer; it reads VFVYTNGVIAGYSLLQALWTI. Residues 108-128 are Cytoplasmic-facing; that stretch reads VAKSSYSTSKARLWTTFFLDQ. Residues 129–148 form a helical membrane-spanning segment; the sequence is FIVYVLIGVTGAATEVAYIA. Over 149 to 170 the chain is Extracellular; it reads EKGESDVAWPKQCNNFGRFCSQ. A helical membrane pass occupies residues 171–191; that stretch reads VGASVIVCFVAILTLVFLAVL. Residues 192–216 lie on the Cytoplasmic side of the membrane; sequence SAKQLFIHERPSRTTRKDGYYTSNQ.

The protein belongs to the Casparian strip membrane proteins (CASP) family. In terms of assembly, homodimer and heterodimers.

It localises to the cell membrane. The protein is CASP-like protein 2U1 of Marchantia polymorpha (Common liverwort).